The chain runs to 136 residues: Large ribosomal subunit protein bL20 (136 aa).

This sequence belongs to the bacterial ribosomal protein bL20 family.

Functionally, binds directly to 23S ribosomal RNA and is necessary for the in vitro assembly process of the 50S ribosomal subunit. It is not involved in the protein synthesizing functions of that subunit. The protein is Large ribosomal subunit protein bL20 of Tropheryma whipplei (strain Twist) (Whipple's bacillus).